Consider the following 439-residue polypeptide: Putative phosphatidate cytidylyltransferase (439 aa).

The segment at 1-37 is disordered; sequence MARKRTNKRNNSDKENGNVGVVQNKDSASSKTTEPAR. The residue at position 12 (Ser-12) is a Phosphoserine. Residues 24 to 33 are compositionally biased toward polar residues; it reads NKDSASSKTT. Transmembrane regions (helical) follow at residues 52-71, 76-98, 110-130, 145-165, 180-199, 245-265, and 321-341; these read FITR…TALA, WVVL…IASV, FINW…SIYA, LVLH…VLFV, FCWT…FMIN, GFLG…YVLM, and FHLA…GFFA.

It belongs to the CDS family. Mg(2+) is required as a cofactor.

It is found in the endoplasmic reticulum membrane. The catalysed reaction is a 1,2-diacyl-sn-glycero-3-phosphate + CTP + H(+) = a CDP-1,2-diacyl-sn-glycerol + diphosphate. It functions in the pathway phospholipid metabolism; CDP-diacylglycerol biosynthesis; CDP-diacylglycerol from sn-glycerol 3-phosphate: step 3/3. Functionally, supplies CDP-diacylglycerol, which may play an important role as both a precursor to phosphoinositide biosynthesis in the plasma membrane and as a negative effector of phosphatidylinositol 4-kinase activity, thereby exerting an effect on cell proliferation via a lipid-dependent signal transduction cascade. In Schizosaccharomyces pombe (strain 972 / ATCC 24843) (Fission yeast), this protein is Putative phosphatidate cytidylyltransferase.